A 325-amino-acid chain; its full sequence is Tumor necrosis factor soluble receptor (325 aa).

Residues 1–16 form the signal peptide; sequence MLRLIALLVCVVYVYG. TNFR-Cys repeat units follow at residues 27–62, 63–104, 105–147, and 148–186; these read KCGG…TVCS, PCED…DRVC, NCST…TLCE, and KCPP…TSCT. Intrachain disulfides connect Cys-28–Cys-39, Cys-40–Cys-53, Cys-43–Cys-61, Cys-64–Cys-79, Cys-82–Cys-96, and Cys-86–Cys-104. The N-linked (GlcNAc...) asparagine; by host glycan is linked to Asn-105. 4 disulfide bridges follow: Cys-106–Cys-120, Cys-123–Cys-146, Cys-129–Cys-149, and Cys-164–Cys-185. Residues Asn-181, Asn-205, and Asn-238 are each glycosylated (N-linked (GlcNAc...) asparagine; by host).

Its function is as follows. Binds to TNF-alpha and beta. Probably prevents TNF to reach cellular target and thereby deampening the potential antiviral effects of the cytokine. The protein is Tumor necrosis factor soluble receptor of Oryctolagus cuniculus (Rabbit).